We begin with the raw amino-acid sequence, 469 residues long: Ubiquitin carboxyl-terminal hydrolase MINDY-1 (469 aa).

The tract at residues 1-105 (MEHHQPEHPA…RLQELPQSPR (105 aa)) is disordered. Residues 23–44 (ENHKVLSEPKEHPQDKDAKEAD) show a composition bias toward basic and acidic residues. Ser-103 is modified (phosphoserine). Catalysis depends on Cys-137, which acts as the Nucleophile. His-319 (proton acceptor) is an active-site residue. Residues 388 to 428 (QVDQDYLIALSLQQQQPPPQGTSGLSDLELAQQLQQEEYQQ) are ubiquitin-binding domain (UBD). The interval 401–469 (QQQPPPQGTS…PKQESDCVLL (69 aa)) is disordered. Low complexity predominate over residues 415 to 448 (LELAQQLQQEEYQQHQAAQAAPARAPSPQGRGAA). At Ser-441 the chain carries Phosphoserine. A compositionally biased stretch (basic and acidic residues) spans 453 to 469 (AAERRQRPKQESDCVLL).

The protein belongs to the MINDY deubiquitinase family. FAM63 subfamily.

The catalysed reaction is Thiol-dependent hydrolysis of ester, thioester, amide, peptide and isopeptide bonds formed by the C-terminal Gly of ubiquitin (a 76-residue protein attached to proteins as an intracellular targeting signal).. Functionally, hydrolase that can specifically remove 'Lys-48'-linked conjugated ubiquitin from proteins. Has exodeubiquitinase activity and has a preference for long polyubiquitin chains. May play a regulatory role at the level of protein turnover. The polypeptide is Ubiquitin carboxyl-terminal hydrolase MINDY-1 (MINDY1) (Bos taurus (Bovine)).